Reading from the N-terminus, the 121-residue chain is Phosphoribosyl-ATP pyrophosphatase (121 aa).

Belongs to the PRA-PH family.

The protein localises to the cytoplasm. It carries out the reaction 1-(5-phospho-beta-D-ribosyl)-ATP + H2O = 1-(5-phospho-beta-D-ribosyl)-5'-AMP + diphosphate + H(+). Its pathway is amino-acid biosynthesis; L-histidine biosynthesis; L-histidine from 5-phospho-alpha-D-ribose 1-diphosphate: step 2/9. The polypeptide is Phosphoribosyl-ATP pyrophosphatase (Burkholderia ambifaria (strain MC40-6)).